Consider the following 213-residue polypeptide: Superoxide dismutase [Fe] (213 aa).

The Fe cation site is built by His28, His82, Asp164, and His168.

Belongs to the iron/manganese superoxide dismutase family. In terms of assembly, homotetramer. Fe cation is required as a cofactor.

It carries out the reaction 2 superoxide + 2 H(+) = H2O2 + O2. In terms of biological role, destroys superoxide anion radicals which are normally produced within the cells and which are toxic to biological systems. The chain is Superoxide dismutase [Fe] (sodB) from Aquifex pyrophilus.